Consider the following 211-residue polypeptide: Mitotic spindle assembly checkpoint protein MAD2B (211 aa).

One can recognise an HORMA domain in the interval 13 to 203 (QVVADVLSEF…SDILKMQLYV (191 aa)). Residues 21 to 155 (EFLEVAVHLI…FTVLVHTREA (135 aa)) are mediates interaction with REV1 and REV3L and homodimerization.

In terms of assembly, homooligomer. Heterodimer with REV3L. This dimer forms the minimal DNA polymerase zeta complex (Pol-zeta2), with REV3L bearing DNA polymerase catalytic activity, although its activity is very low in this context. Component of the tetrameric Pol-zeta complex (Pol-zeta4), which consists of REV3L, MAD2L2, POLD2 and POLD3; Pol-zeta4 is the fully active form of DNA polymerase zeta. Component of the shieldin complex, consisting of SHLD1, SHLD2, SHLD3 and MAD2L2/REV7. Within the complex, SHLD2 forms a scaffold which interacts with a SHLD3-MAD2L2 subcomplex via its N-terminus, and with SHLD1 via its C-terminus. Interacts with REV1. Interacts with ADAM9. Interacts with CHAMP1. Interacts with FZR1 (in complex with the anaphase promoting complex APC). May interact with CDC20. Interacts with RAN. Interacts with ELK1; the interaction is direct and recruits MAD2L2 to ELK1-specific promoters. May interact with the JNK kinases MAPK8 and/or MAPK9 to stimulate ELK1 phosphorylation and transcriptional activity upon DNA damage. Interacts with TCF7L2; prevents its binding to promoters and negatively modulates its transcriptional activity. Interacts with YY1AP1. Interacts with PRCC; the interaction is direct. Interacts with POGZ. Interacts with ASTE1.

It is found in the nucleus. The protein resides in the cytoplasm. The protein localises to the cytoskeleton. Its subcellular location is the spindle. In terms of biological role, adapter protein able to interact with different proteins and involved in different biological processes. Mediates the interaction between the error-prone DNA polymerase zeta catalytic subunit REV3L and the inserter polymerase REV1, thereby mediating the second polymerase switching in translesion DNA synthesis. Translesion DNA synthesis releases the replication blockade of replicative polymerases, stalled in presence of DNA lesions. Component of the shieldin complex, which plays an important role in repair of DNA double-stranded breaks (DSBs). During G1 and S phase of the cell cycle, the complex functions downstream of TP53BP1 to promote non-homologous end joining (NHEJ) and suppress DNA end resection. Mediates various NHEJ-dependent processes including immunoglobulin class-switch recombination, and fusion of unprotected telomeres. May also regulate another aspect of cellular response to DNA damage through regulation of the JNK-mediated phosphorylation and activation of the transcriptional activator ELK1. Inhibits the FZR1- and probably CDC20-mediated activation of the anaphase promoting complex APC thereby regulating progression through the cell cycle. Regulates TCF7L2-mediated gene transcription and may play a role in epithelial-mesenchymal transdifferentiation. In Rattus norvegicus (Rat), this protein is Mitotic spindle assembly checkpoint protein MAD2B (Mad2l2).